Here is a 255-residue protein sequence, read N- to C-terminus: NADPH-dependent FMN reductase ArsH (255 aa).

Residue 43–50 (SLRARSFS) participates in FMN binding.

It belongs to the ArsH family. Homotetramer. FMN serves as cofactor.

In terms of biological role, has NADPH-dependent FMN reductase activity and very low azoreductase activity. No activity with NADH. The sequence is that of NADPH-dependent FMN reductase ArsH from Shigella flexneri.